The sequence spans 345 residues: MKLTKIRTEGDFNWGPFLTDSDGYFTIPIPDSQAGKKFRIRIEPWDINYAARIARDLDRCNEYVWFLSDEITVPDHGRLDLGELRIGKDANYDFTAYWQEKRHTCLFGLCACGGSVHVIQGGSVYLNIADALLAARAYADLHRSDDDGIGRVDVQYPDSDWSNYDQTWDEITLTTNHGFLDGVAIHEYGHFLEDHISEEDIYVGNTSHTFCDDKDDTEFAWSEGFAEYYGTFIVAINDHLSHPDISFGTIENPGCSKFDDDIEATVAAVLWDMVDNSSFPDYNASESFDTVGGLDDVIFKMFDSELDHWHDAPDLCEMHGNLDHRLDSTTLNKVERIFEHYNACR.

This is an uncharacterized protein from Archaeoglobus fulgidus (strain ATCC 49558 / DSM 4304 / JCM 9628 / NBRC 100126 / VC-16).